Consider the following 266-residue polypeptide: MDTFQVIILALIQGLTEFLPISSSAHLILPAQLLDWQDQGLSFDVAVNTGSLLAVVMYFRKELYSMFMAWTGSIASGKQTQESKLSWWIILATIPAVIVGFTAKGFIETYLRNIEVIAATTIIFGLLLWWADRMQRQGFNEFQVGWKKALVIGLAQAMALIPGTSRSGATITAALMLGLSREAAARFSFLMSVPVSLGAAILVTKDLLSSGQAIDYQALGLGIVVSFIAAYVCIHYFLKIISKMGMTPFVIYRLVLGAVLCGFIFL.

Transmembrane regions (helical) follow at residues 1–21 (MDTF…FLPI), 39–59 (QGLS…VMYF), 87–107 (WWII…KGFI), 111–131 (LRNI…LWWA), 144–164 (VGWK…IPGT), 183–203 (AAAR…AILV), 218–238 (ALGL…HYFL), and 246–266 (MTPF…FIFL).

This sequence belongs to the UppP family.

It is found in the cell inner membrane. It catalyses the reaction di-trans,octa-cis-undecaprenyl diphosphate + H2O = di-trans,octa-cis-undecaprenyl phosphate + phosphate + H(+). In terms of biological role, catalyzes the dephosphorylation of undecaprenyl diphosphate (UPP). Confers resistance to bacitracin. The polypeptide is Undecaprenyl-diphosphatase (Shewanella piezotolerans (strain WP3 / JCM 13877)).